The sequence spans 269 residues: Monofunctional glycosyltransferase (269 aa).

Residues Ile46 to Thr66 form a helical membrane-spanning segment.

It belongs to the glycosyltransferase 51 family.

It is found in the cell membrane. It carries out the reaction [GlcNAc-(1-&gt;4)-Mur2Ac(oyl-L-Ala-gamma-D-Glu-L-Lys-D-Ala-D-Ala)](n)-di-trans,octa-cis-undecaprenyl diphosphate + beta-D-GlcNAc-(1-&gt;4)-Mur2Ac(oyl-L-Ala-gamma-D-Glu-L-Lys-D-Ala-D-Ala)-di-trans,octa-cis-undecaprenyl diphosphate = [GlcNAc-(1-&gt;4)-Mur2Ac(oyl-L-Ala-gamma-D-Glu-L-Lys-D-Ala-D-Ala)](n+1)-di-trans,octa-cis-undecaprenyl diphosphate + di-trans,octa-cis-undecaprenyl diphosphate + H(+). Its pathway is cell wall biogenesis; peptidoglycan biosynthesis. In terms of biological role, peptidoglycan polymerase that catalyzes glycan chain elongation using lipid-linked disaccharide-pentapeptide as the substrate. This is Monofunctional glycosyltransferase from Staphylococcus aureus (strain JH1).